A 561-amino-acid polypeptide reads, in one-letter code: Arginine--tRNA ligase (561 aa).

Positions 119-129 (PNIAKPMSMGH) match the 'HIGH' region motif.

The protein belongs to the class-I aminoacyl-tRNA synthetase family. Monomer.

It localises to the cytoplasm. The catalysed reaction is tRNA(Arg) + L-arginine + ATP = L-arginyl-tRNA(Arg) + AMP + diphosphate. This is Arginine--tRNA ligase from Lactobacillus acidophilus (strain ATCC 700396 / NCK56 / N2 / NCFM).